A 235-amino-acid chain; its full sequence is UPF0502 protein Bcep18194_B0081 (235 aa).

The protein belongs to the UPF0502 family.

The protein is UPF0502 protein Bcep18194_B0081 of Burkholderia lata (strain ATCC 17760 / DSM 23089 / LMG 22485 / NCIMB 9086 / R18194 / 383).